We begin with the raw amino-acid sequence, 250 residues long: tRNA (guanine-N(1)-)-methyltransferase (250 aa).

S-adenosyl-L-methionine contacts are provided by residues G116 and 136-141 (IGDYVL).

The protein belongs to the RNA methyltransferase TrmD family. Homodimer.

Its subcellular location is the cytoplasm. It catalyses the reaction guanosine(37) in tRNA + S-adenosyl-L-methionine = N(1)-methylguanosine(37) in tRNA + S-adenosyl-L-homocysteine + H(+). In terms of biological role, specifically methylates guanosine-37 in various tRNAs. The sequence is that of tRNA (guanine-N(1)-)-methyltransferase from Stutzerimonas stutzeri (strain A1501) (Pseudomonas stutzeri).